A 99-amino-acid chain; its full sequence is NADH-ubiquinone oxidoreductase chain 4L (99 aa).

Helical transmembrane passes span 4-24, 29-49, and 63-83; these read MFLM…VFVS, LLST…FLFF, and FFLT…VSMI.

Belongs to the complex I subunit 4L family.

Its subcellular location is the mitochondrion membrane. The catalysed reaction is a ubiquinone + NADH + 5 H(+)(in) = a ubiquinol + NAD(+) + 4 H(+)(out). Functionally, core subunit of the mitochondrial membrane respiratory chain NADH dehydrogenase (Complex I) that is believed to belong to the minimal assembly required for catalysis. Complex I functions in the transfer of electrons from NADH to the respiratory chain. The immediate electron acceptor for the enzyme is believed to be ubiquinone. This is NADH-ubiquinone oxidoreductase chain 4L (mt:ND4L) from Anopheles gambiae (African malaria mosquito).